The chain runs to 86 residues: Exodeoxyribonuclease 7 small subunit (86 aa).

Positions M1 to S26 are disordered.

Belongs to the XseB family. In terms of assembly, heterooligomer composed of large and small subunits.

It is found in the cytoplasm. It carries out the reaction Exonucleolytic cleavage in either 5'- to 3'- or 3'- to 5'-direction to yield nucleoside 5'-phosphates.. In terms of biological role, bidirectionally degrades single-stranded DNA into large acid-insoluble oligonucleotides, which are then degraded further into small acid-soluble oligonucleotides. The sequence is that of Exodeoxyribonuclease 7 small subunit from Helicobacter pylori (strain Shi470).